A 377-amino-acid polypeptide reads, in one-letter code: MANASEPGGGGGGAEAAALGLRLATLSLLLCVSLAGNVLFALLIVRERSLHRAPYYLLLDLCLADGLRALACLPAVMLAARRAAAAAGTPPGALGCKLLAFLAALFCFHAAFLLLGVGVTRYLAIAHHRFYAERLAGWPCAAMLVCAAWALALAAAFPPVLDGGGADDEDAPCALEQRPDGAPGALGFLLLLAAVVGATHLVYLRLLFFIHDRRKMRPARLVPAVSHDWTFHGPGATGQAAANWTAGFGRGPTPPALVGIRPAGPGRGARRLLVLEEFKTEKRLCKMFYAITLLFLLLWGPYVVASYLRVLVRPGAVPQAYLTASVWLTFAQAGINPVVCFLFNRELRDCFRAQFPCCQSPQATQATLPCDLKGIGL.

Residues 1 to 24 are Extracellular-facing; that stretch reads MANASEPGGGGGGAEAAALGLRLA. Residue Asn3 is glycosylated (N-linked (GlcNAc...) asparagine). The helical transmembrane segment at 25 to 45 threads the bilayer; it reads TLSLLLCVSLAGNVLFALLIV. Over 46–56 the chain is Cytoplasmic; it reads RERSLHRAPYY. The chain crosses the membrane as a helical span at residues 57 to 77; the sequence is LLLDLCLADGLRALACLPAVM. Residues 78 to 98 lie on the Extracellular side of the membrane; that stretch reads LAARRAAAAAGTPPGALGCKL. Cys96 and Cys173 are disulfide-bonded. Residues 99 to 119 traverse the membrane as a helical segment; sequence LAFLAALFCFHAAFLLLGVGV. Over 120–140 the chain is Cytoplasmic; sequence TRYLAIAHHRFYAERLAGWPC. Residues 141–161 traverse the membrane as a helical segment; that stretch reads AAMLVCAAWALALAAAFPPVL. The Extracellular portion of the chain corresponds to 162-183; that stretch reads DGGGADDEDAPCALEQRPDGAP. Residues 184-204 form a helical membrane-spanning segment; sequence GALGFLLLLAAVVGATHLVYL. At 205–287 the chain is on the cytoplasmic side; the sequence is RLLFFIHDRR…FKTEKRLCKM (83 aa). The helical transmembrane segment at 288–308 threads the bilayer; it reads FYAITLLFLLLWGPYVVASYL. Over 309-322 the chain is Extracellular; the sequence is RVLVRPGAVPQAYL. The chain crosses the membrane as a helical span at residues 323–343; sequence TASVWLTFAQAGINPVVCFLF. Topologically, residues 344–377 are cytoplasmic; the sequence is NRELRDCFRAQFPCCQSPQATQATLPCDLKGIGL.

This sequence belongs to the G-protein coupled receptor 1 family. In terms of tissue distribution, expressed as a 3.0 kb transcript, in whole brain, hippocampus, striatum, frontal cortex, thalamus, pons and hypothalamus. A lower molecular weight transcript was detected in all regions examined, except the hypothalamus.

The protein resides in the cell membrane. Orphan receptor. Possible candidate for amine-like G-protein coupled receptor. In Rattus norvegicus (Rat), this protein is Probable G-protein coupled receptor 27 (Gpr27).